Reading from the N-terminus, the 406-residue chain is Tryptophan synthase beta chain (406 aa).

Lysine 99 is subject to N6-(pyridoxal phosphate)lysine.

This sequence belongs to the TrpB family. As to quaternary structure, tetramer of two alpha and two beta chains. The cofactor is pyridoxal 5'-phosphate.

It catalyses the reaction (1S,2R)-1-C-(indol-3-yl)glycerol 3-phosphate + L-serine = D-glyceraldehyde 3-phosphate + L-tryptophan + H2O. It participates in amino-acid biosynthesis; L-tryptophan biosynthesis; L-tryptophan from chorismate: step 5/5. Its function is as follows. The beta subunit is responsible for the synthesis of L-tryptophan from indole and L-serine. The polypeptide is Tryptophan synthase beta chain (Brucella canis (strain ATCC 23365 / NCTC 10854 / RM-666)).